The primary structure comprises 447 residues: GTPase Der (447 aa).

EngA-type G domains are found at residues 3–167 and 180–353; these read PVIA…ALPE and IRLA…KSAN. GTP-binding positions include 9–16, 56–60, 119–122, 186–193, 233–237, and 298–301; these read GRPNVGKS, DTGGF, NKAE, DTAGL, and NKWD. The KH-like domain maps to 354–438; the sequence is RKMPTPVLTR…PLRIEMKTSS (85 aa).

This sequence belongs to the TRAFAC class TrmE-Era-EngA-EngB-Septin-like GTPase superfamily. EngA (Der) GTPase family. As to quaternary structure, associates with the 50S ribosomal subunit.

Its function is as follows. GTPase that plays an essential role in the late steps of ribosome biogenesis. In Acidovorax sp. (strain JS42), this protein is GTPase Der.